A 213-amino-acid polypeptide reads, in one-letter code: CDP-diacylglycerol--inositol 3-phosphatidyltransferase (213 aa).

The Cytoplasmic portion of the chain corresponds to 1–5 (MPEEN). Residues 6–26 (IFLFVPNLIGYARIVFAIISF) traverse the membrane as a helical segment. Tyr-27 is a topological domain (lumenal). A helical transmembrane segment spans residues 28-48 (FMPCCPFTASSFYLLSGLLDA). Mg(2+) contacts are provided by Asp-47 and Asp-50. Topologically, residues 49–73 (FDGHAARALNQGTRFGAMLDMLTDR) are cytoplasmic. Residues Gly-51, Arg-55, and Thr-61 each contribute to the a CDP-1,2-diacyl-sn-glycerol site. Mg(2+) contacts are provided by Asp-68 and Asp-72. Asp-72 (proton acceptor) is an active-site residue. A helical transmembrane segment spans residues 74–94 (CATMCLLVNLALLYPRATLLF). Position 95 (Gln-95) is a topological domain, lumenal. Residues 96 to 116 (LSMSLDVASHWLHLHSSVVRG) traverse the membrane as a helical segment. Residues 117–139 (SESHKMIDLSGNPVLRIYYTSRP) lie on the Cytoplasmic side of the membrane. The chain crosses the membrane as a helical span at residues 140 to 160 (ALFTLCAGNELFYCLLYLFNF). Topologically, residues 161–174 (SEGPLVGSVGLFRM) are lumenal. A helical transmembrane segment spans residues 175–195 (GLWITAPIALLKSIISVIHLV). Topologically, residues 196 to 213 (TAARNMAALDAADRAKKK) are cytoplasmic.

Belongs to the CDP-alcohol phosphatidyltransferase class-I family. Requires Mn(2+) as cofactor. Mg(2+) serves as cofactor. In terms of tissue distribution, detected in liver (at protein level). Widely expressed. Highly expressed in the brain and kidney; lower levels in heart, spleen, lung, liver, skeletal muscle and testis.

It is found in the endoplasmic reticulum membrane. The protein localises to the cell membrane. It carries out the reaction a CDP-1,2-diacyl-sn-glycerol + myo-inositol = a 1,2-diacyl-sn-glycero-3-phospho-(1D-myo-inositol) + CMP + H(+). Catalyzes the biosynthesis of phosphatidylinositol (PtdIns) as well as PtdIns:inositol exchange reaction. May thus act to reduce an excessive cellular PtdIns content. The exchange activity is due to the reverse reaction of PtdIns synthase and is dependent on CMP, which is tightly bound to the enzyme. In Rattus norvegicus (Rat), this protein is CDP-diacylglycerol--inositol 3-phosphatidyltransferase.